Reading from the N-terminus, the 265-residue chain is Imidazole glycerol phosphate synthase subunit HisF (265 aa).

Catalysis depends on residues Asp17 and Asp136.

It belongs to the HisA/HisF family. In terms of assembly, heterodimer of HisH and HisF.

It is found in the cytoplasm. It carries out the reaction 5-[(5-phospho-1-deoxy-D-ribulos-1-ylimino)methylamino]-1-(5-phospho-beta-D-ribosyl)imidazole-4-carboxamide + L-glutamine = D-erythro-1-(imidazol-4-yl)glycerol 3-phosphate + 5-amino-1-(5-phospho-beta-D-ribosyl)imidazole-4-carboxamide + L-glutamate + H(+). It functions in the pathway amino-acid biosynthesis; L-histidine biosynthesis; L-histidine from 5-phospho-alpha-D-ribose 1-diphosphate: step 5/9. IGPS catalyzes the conversion of PRFAR and glutamine to IGP, AICAR and glutamate. The HisF subunit catalyzes the cyclization activity that produces IGP and AICAR from PRFAR using the ammonia provided by the HisH subunit. The sequence is that of Imidazole glycerol phosphate synthase subunit HisF from Mycolicibacterium paratuberculosis (strain ATCC BAA-968 / K-10) (Mycobacterium paratuberculosis).